Here is an 89-residue protein sequence, read N- to C-terminus: Acylphosphatase (89 aa).

The region spanning 3–89 is the Acylphosphatase-like domain; sequence RKEFLVSGRV…DTREKRFSTY (87 aa). Residues arginine 18 and asparagine 36 contribute to the active site.

The protein belongs to the acylphosphatase family.

The enzyme catalyses an acyl phosphate + H2O = a carboxylate + phosphate + H(+). The protein is Acylphosphatase (acyP) of Clostridium perfringens (strain ATCC 13124 / DSM 756 / JCM 1290 / NCIMB 6125 / NCTC 8237 / Type A).